We begin with the raw amino-acid sequence, 158 residues long: Frataxin homolog, mitochondrial (158 aa).

The protein belongs to the frataxin family. Monomer. Oligomer.

Its subcellular location is the mitochondrion. It carries out the reaction 4 Fe(2+) + O2 + 4 H(+) = 4 Fe(3+) + 2 H2O. In terms of biological role, promotes the biosynthesis of heme as well as the assembly and repair of iron-sulfur clusters by delivering Fe(2+) to proteins involved in these pathways. May play a role in the protection against iron-catalyzed oxidative stress through its ability to catalyze the oxidation of Fe(2+) to Fe(3+). May be able to store large amounts of the metal in the form of a ferrihydrite mineral by oligomerization. In Schizosaccharomyces pombe (strain 972 / ATCC 24843) (Fission yeast), this protein is Frataxin homolog, mitochondrial.